Here is a 59-residue protein sequence, read N- to C-terminus: MLDKQLLDILVCPVCKGTLSVDKGHTELVCDKDKLAFPVRDDIPVMLMEEARKLEADDA.

It belongs to the UPF0434 family.

The sequence is that of UPF0434 protein Mmc1_0910 from Magnetococcus marinus (strain ATCC BAA-1437 / JCM 17883 / MC-1).